The chain runs to 909 residues: Aconitate hydratase A (909 aa).

Residues C450, C516, and C519 each coordinate [4Fe-4S] cluster.

This sequence belongs to the aconitase/IPM isomerase family. In terms of assembly, monomer. [4Fe-4S] cluster serves as cofactor.

The catalysed reaction is citrate = D-threo-isocitrate. It catalyses the reaction 3-hydroxybutane-1,2,3-tricarboxylate = 2-methyl-cis-aconitate + H2O. It participates in carbohydrate metabolism; tricarboxylic acid cycle; isocitrate from oxaloacetate: step 2/2. Functionally, involved in both the tricarboxylic acid (TCA) and methylcitric acid cycles. Catalyzes the reversible isomerization of citrate to isocitrate via cis-aconitate. Also catalyzes the rehydration of 2-methyl-cis-aconitate to produce 2-methylisocitrate. The apo form of AcnA functions as a RNA-binding regulatory protein which plays a role in the regulation of citrate concentration and in the sporulation. To prevent the accumulation of excessive levels of citrate, it binds near the 5' end of the citZ mRNA, decreasing its stability and thereby limiting the concentration of citrate synthase in the cell. Aconitase also binds to the gerE transcript late in sporulation and stabilizes it for translation, thereby increasing the rate and level of GerE protein accumulation. This chain is Aconitate hydratase A (citB), found in Bacillus subtilis (strain 168).